The chain runs to 357 residues: Protein-glutamate methylesterase/protein-glutamine glutaminase 1 (357 aa).

Residues 7–124 form the Response regulatory domain; that stretch reads KVLCVDDSAL…REGLLDYTQT (118 aa). Asp58 is subject to 4-aspartylphosphate. The CheB-type methylesterase domain maps to 158 to 350; that stretch reads LLSTEKLIIV…QRVMAHLATF (193 aa). Active-site residues include Ser170, His196, and Asp292.

It belongs to the CheB family. Phosphorylated by CheA. Phosphorylation of the N-terminal regulatory domain activates the methylesterase activity.

It is found in the cytoplasm. The catalysed reaction is [protein]-L-glutamate 5-O-methyl ester + H2O = L-glutamyl-[protein] + methanol + H(+). The enzyme catalyses L-glutaminyl-[protein] + H2O = L-glutamyl-[protein] + NH4(+). Involved in chemotaxis. Part of a chemotaxis signal transduction system that modulates chemotaxis in response to various stimuli. Catalyzes the demethylation of specific methylglutamate residues introduced into the chemoreceptors (methyl-accepting chemotaxis proteins or MCP) by CheR. Also mediates the irreversible deamidation of specific glutamine residues to glutamic acid. The protein is Protein-glutamate methylesterase/protein-glutamine glutaminase 1 of Cupriavidus metallidurans (strain ATCC 43123 / DSM 2839 / NBRC 102507 / CH34) (Ralstonia metallidurans).